The following is a 107-amino-acid chain: MISGDTILFALMLVTAINVARYVTALRSLIYIMREAHPLLYQQVDGRGFFTTHGNVTKQVRLYHYLKSREYHHHHDPVFTGKCDRVRELFILSGSLLVLTTVVAFML.

Transmembrane regions (helical) follow at residues 6–25 (TILF…YVTA) and 89–106 (LFIL…VAFM).

Belongs to the universal stress protein B family.

It localises to the cell inner membrane. The sequence is that of Universal stress protein B homolog from Vibrio cholerae serotype O1 (strain ATCC 39541 / Classical Ogawa 395 / O395).